The chain runs to 186 residues: Peptidyl-tRNA hydrolase (186 aa).

Y14 contacts tRNA. The Proton acceptor role is filled by H19. Positions 65, 67, and 113 each coordinate tRNA.

Belongs to the PTH family. In terms of assembly, monomer.

The protein localises to the cytoplasm. The catalysed reaction is an N-acyl-L-alpha-aminoacyl-tRNA + H2O = an N-acyl-L-amino acid + a tRNA + H(+). Hydrolyzes ribosome-free peptidyl-tRNAs (with 1 or more amino acids incorporated), which drop off the ribosome during protein synthesis, or as a result of ribosome stalling. In terms of biological role, catalyzes the release of premature peptidyl moieties from peptidyl-tRNA molecules trapped in stalled 50S ribosomal subunits, and thus maintains levels of free tRNAs and 50S ribosomes. The chain is Peptidyl-tRNA hydrolase from Limosilactobacillus reuteri (strain DSM 20016) (Lactobacillus reuteri).